The following is a 203-amino-acid chain: Glycerol-3-phosphate acyltransferase (203 aa).

Helical transmembrane passes span 3–23 (ILLA…VVVS), 51–71 (KAAI…VWLV), 74–94 (FGIG…LGHL), 116–136 (AVHP…AFFF), 140–160 (SLAA…LFGT), and 164–178 (PVAW…LLIW).

This sequence belongs to the PlsY family. Probably interacts with PlsX.

It is found in the cell inner membrane. The catalysed reaction is an acyl phosphate + sn-glycerol 3-phosphate = a 1-acyl-sn-glycero-3-phosphate + phosphate. It functions in the pathway lipid metabolism; phospholipid metabolism. Its function is as follows. Catalyzes the transfer of an acyl group from acyl-phosphate (acyl-PO(4)) to glycerol-3-phosphate (G3P) to form lysophosphatidic acid (LPA). This enzyme utilizes acyl-phosphate as fatty acyl donor, but not acyl-CoA or acyl-ACP. The protein is Glycerol-3-phosphate acyltransferase of Burkholderia pseudomallei (strain 1710b).